We begin with the raw amino-acid sequence, 422 residues long: Glutamate-1-semialdehyde 2,1-aminomutase (422 aa).

Residue K258 is modified to N6-(pyridoxal phosphate)lysine.

This sequence belongs to the class-III pyridoxal-phosphate-dependent aminotransferase family. HemL subfamily. Homodimer. Pyridoxal 5'-phosphate serves as cofactor.

It is found in the cytoplasm. The enzyme catalyses (S)-4-amino-5-oxopentanoate = 5-aminolevulinate. It functions in the pathway porphyrin-containing compound metabolism; protoporphyrin-IX biosynthesis; 5-aminolevulinate from L-glutamyl-tRNA(Glu): step 2/2. This Chlamydia trachomatis serovar L2 (strain ATCC VR-902B / DSM 19102 / 434/Bu) protein is Glutamate-1-semialdehyde 2,1-aminomutase.